We begin with the raw amino-acid sequence, 332 residues long: Ubiquinol oxidase 1a, mitochondrial (332 aa).

A mitochondrion-targeting transit peptide spans 1–54 (MSSRMAGSAILRHVGGVRLFTASATSPAAAAAAAARPFLAGGEAVPGVWGLRLM). Residues 157 to 177 (AMMLETVAAVPGMVGGMLLHL) traverse the membrane as a helical segment. Residues glutamate 161, glutamate 200, and histidine 203 each coordinate Fe cation. Residues 219 to 239 (ALVITVQGVFFNAYFLGYLLS) traverse the membrane as a helical segment. 3 residues coordinate Fe cation: glutamate 251, glutamate 302, and histidine 305.

This sequence belongs to the alternative oxidase family. In terms of assembly, homodimer; disulfide-linked. Fe cation is required as a cofactor. Expressed in roots, leaf sheaths and leaf blades.

Its subcellular location is the mitochondrion inner membrane. It catalyses the reaction 2 a ubiquinol + O2 = 2 a ubiquinone + 2 H2O. In terms of biological role, catalyzes the cyanide-resistant oxidation of ubiquinol and the reduction of molecular oxygen to water, but does not translocate protons and consequently is not linked to oxidative phosphorylation. May increase respiration when the cytochrome respiratory pathway is restricted, or in response to low temperatures. The sequence is that of Ubiquinol oxidase 1a, mitochondrial from Oryza sativa subsp. japonica (Rice).